Reading from the N-terminus, the 573-residue chain is Dilute domain-containing protein SPAC25B8.08 (573 aa).

The 285-residue stretch at 180–464 folds into the Dilute domain; the sequence is NAFLCEVNQV…LKKLDAFHEE (285 aa).

It is found in the cytoplasm. The protein resides in the golgi apparatus. This Schizosaccharomyces pombe (strain 972 / ATCC 24843) (Fission yeast) protein is Dilute domain-containing protein SPAC25B8.08.